A 403-amino-acid polypeptide reads, in one-letter code: Chalcone synthase 3 (403 aa).

The active site involves cysteine 170.

This sequence belongs to the thiolase-like superfamily. Chalcone/stilbene synthases family.

The catalysed reaction is (E)-4-coumaroyl-CoA + 3 malonyl-CoA + 3 H(+) = 2',4,4',6'-tetrahydroxychalcone + 3 CO2 + 4 CoA. It participates in secondary metabolite biosynthesis; flavonoid biosynthesis. Its function is as follows. The primary product of this enzyme is 4,2',4',6'-tetrahydroxychalcone (also termed naringenin-chalcone or chalcone) which can under specific conditions spontaneously isomerize into naringenin. The protein is Chalcone synthase 3 (CHS3) of Gerbera hybrida (Daisy).